Here is a 164-residue protein sequence, read N- to C-terminus: Glutaredoxin-2, mitochondrial (164 aa).

A mitochondrion-targeting transit peptide spans 1 to 19 (MIWRRAALAGTRLVWSRSG). Serine 20 carries the post-translational modification Phosphoserine. Residues 57 to 157 (VNQIQETISD…PLVHQCYLKK (101 aa)) enclose the Glutaredoxin domain. Cysteine 68 contacts [2Fe-2S] cluster. Lysine 74 contributes to the glutathione binding site. The residue at position 77 (cysteine 77) is an S-glutathionyl cysteine; alternate. Cysteines 77 and 80 form a disulfide. Positions 109 and 121 each coordinate glutathione. Cysteine 153 serves as a coordination point for [2Fe-2S] cluster.

It belongs to the glutaredoxin family. In terms of assembly, monomer; active form. Homodimer; inactive form. The homodimer is probably linked by 1 2Fe-2S cluster. As to expression, widely expressed. Expressed in brain, heart, skeletal muscle, colon, thymus, spleen, kidney, liver, small intestine, placenta and lung. Not expressed in peripheral blood leukocytes.

Its subcellular location is the mitochondrion. It localises to the nucleus. Its activity is regulated as follows. The 2Fe-2S present in the homodimer leads to inactivation of the enzyme. The 2Fe-2S may serve as a redox sensor: the presence of one-electron oxidants or reductants leading to the loss of the 2Fe-2S cluster, subsequent monomerization and activation of the enzyme. Unlike other glutaredoxins, it is not inhibited by oxidation of structural Cys residues. Functionally, glutathione-dependent oxidoreductase that facilitates the maintenance of mitochondrial redox homeostasis upon induction of apoptosis by oxidative stress. Involved in response to hydrogen peroxide and regulation of apoptosis caused by oxidative stress. Acts as a very efficient catalyst of monothiol reactions because of its high affinity for protein glutathione-mixed disulfides. Can receive electrons not only from glutathione (GSH), but also from thioredoxin reductase supporting both monothiol and dithiol reactions. Efficiently catalyzes both glutathionylation and deglutathionylation of mitochondrial complex I, which in turn regulates the superoxide production by the complex. Overexpression decreases the susceptibility to apoptosis and prevents loss of cardiolipin and cytochrome c release. The protein is Glutaredoxin-2, mitochondrial (GLRX2) of Homo sapiens (Human).